Reading from the N-terminus, the 284-residue chain is MEMO1 family protein STK_20620 (284 aa).

This sequence belongs to the MEMO1 family.

The chain is MEMO1 family protein STK_20620 from Sulfurisphaera tokodaii (strain DSM 16993 / JCM 10545 / NBRC 100140 / 7) (Sulfolobus tokodaii).